Reading from the N-terminus, the 370-residue chain is Actin-related protein 2/3 complex subunit 1A-A (370 aa).

6 WD repeats span residues 6–45, 50–89, 140–179, 202–241, 244–284, and 322–365; these read FLLE…WVKG, EHNG…WKPT, PIRS…VDEK, SSGG…SVSQ, TEFL…TFVS, and LHQN…SYIQ.

The protein belongs to the WD repeat ARPC1 family. Component of the Arp2/3 complex.

It localises to the cytoplasm. The protein resides in the cytoskeleton. Its subcellular location is the nucleus. Its function is as follows. Probably functions as a component of the Arp2/3 complex which is involved in regulation of actin polymerization and together with an activating nucleation-promoting factor (NPF) mediates the formation of branched actin networks. In addition to its role in the cytoplasmic cytoskeleton, the Arp2/3 complex also promotes actin polymerization in the nucleus, thereby regulating gene transcription and repair of damaged DNA. This is Actin-related protein 2/3 complex subunit 1A-A (arpc1a-a) from Xenopus laevis (African clawed frog).